We begin with the raw amino-acid sequence, 442 residues long: Cell division protein FtsA (442 aa).

The disordered stretch occupies residues 401-428 (VTSYDNDSYDAPEETVYDEPEQKKSDED). Over residues 407 to 419 (DSYDAPEETVYDE) the composition is skewed to acidic residues.

This sequence belongs to the FtsA/MreB family. As to quaternary structure, self-interacts. Interacts with FtsZ.

Its subcellular location is the cell membrane. Its function is as follows. Cell division protein that is involved in the assembly of the Z ring. May serve as a membrane anchor for the Z ring. This chain is Cell division protein FtsA, found in Enterococcus hirae.